The primary structure comprises 83 residues: uncharacterized protein (83 aa).

The helical transmembrane segment at 50 to 70 (IMVFLGEAWIILIPFAIFCII) threads the bilayer.

The protein belongs to the plectrovirus ORF7 family.

It is found in the host membrane. This is an uncharacterized protein from Spiroplasma citri (SpV1).